The primary structure comprises 66 residues: Alpha-actitoxin-Ms11a-2 (66 aa).

The N-terminal stretch at 1-24 (MASKIFFVLAVFLVMSAVLPESFA) is a signal peptide. Intrachain disulfides connect C26-C41, C33-C46, and C40-C61.

It localises to the secreted. It is found in the nematocyst. Alpha-toxins act on postsynaptic membranes, they bind to the nicotinic acetylcholine receptors (nAChR) and thus inhibit them. This toxin competes with alpha-bungarotoxin for binding to orthosteric sites on muscle-type T.carlifornicus (IC(50)=1080 nM) and human alpha-7/CHRNA7 nAChRs (IC(50)=14.13 uM). This is Alpha-actitoxin-Ms11a-2 from Metridium senile (Brown sea anemone).